A 320-amino-acid chain; its full sequence is Aspartate carbamoyltransferase catalytic subunit (320 aa).

Carbamoyl phosphate is bound by residues arginine 70 and threonine 71. Lysine 98 contributes to the L-aspartate binding site. Positions 120, 149, and 152 each coordinate carbamoyl phosphate. Residues arginine 182 and arginine 237 each contribute to the L-aspartate site. Carbamoyl phosphate contacts are provided by glycine 278 and proline 279.

Belongs to the aspartate/ornithine carbamoyltransferase superfamily. ATCase family. As to quaternary structure, heterododecamer (2C3:3R2) of six catalytic PyrB chains organized as two trimers (C3), and six regulatory PyrI chains organized as three dimers (R2).

It catalyses the reaction carbamoyl phosphate + L-aspartate = N-carbamoyl-L-aspartate + phosphate + H(+). Its pathway is pyrimidine metabolism; UMP biosynthesis via de novo pathway; (S)-dihydroorotate from bicarbonate: step 2/3. Its function is as follows. Catalyzes the condensation of carbamoyl phosphate and aspartate to form carbamoyl aspartate and inorganic phosphate, the committed step in the de novo pyrimidine nucleotide biosynthesis pathway. The chain is Aspartate carbamoyltransferase catalytic subunit from Vesicomyosocius okutanii subsp. Calyptogena okutanii (strain HA).